Here is a 319-residue protein sequence, read N- to C-terminus: Nucleotide-binding protein Mvan_2698 (319 aa).

Residues 1–12 (MTEQGMHQELRE) show a composition bias toward basic and acidic residues. A disordered region spans residues 1–26 (MTEQGMHQELREGAGTAGDEGGLEAA). 43 to 50 (GLSGAGRG) lines the ATP pocket. Position 94-97 (94-97 (DVRS)) interacts with GTP.

It belongs to the RapZ-like family.

Functionally, displays ATPase and GTPase activities. The sequence is that of Nucleotide-binding protein Mvan_2698 from Mycolicibacterium vanbaalenii (strain DSM 7251 / JCM 13017 / BCRC 16820 / KCTC 9966 / NRRL B-24157 / PYR-1) (Mycobacterium vanbaalenii).